The chain runs to 403 residues: Multifunctional CCA protein (403 aa).

ATP contacts are provided by Gly-8 and Arg-11. CTP-binding residues include Gly-8 and Arg-11. Residues Asp-21 and Asp-23 each coordinate Mg(2+). The ATP site is built by Arg-91, Arg-137, and Arg-140. CTP-binding residues include Arg-91, Arg-137, and Arg-140. Residues 228 to 329 (TGIHTLMVAK…LKVLGLLDVW (102 aa)) enclose the HD domain.

This sequence belongs to the tRNA nucleotidyltransferase/poly(A) polymerase family. Bacterial CCA-adding enzyme type 1 subfamily. As to quaternary structure, monomer. Can also form homodimers and oligomers. Mg(2+) serves as cofactor. Ni(2+) is required as a cofactor.

It carries out the reaction a tRNA precursor + 2 CTP + ATP = a tRNA with a 3' CCA end + 3 diphosphate. The catalysed reaction is a tRNA with a 3' CCA end + 2 CTP + ATP = a tRNA with a 3' CCACCA end + 3 diphosphate. Functionally, catalyzes the addition and repair of the essential 3'-terminal CCA sequence in tRNAs without using a nucleic acid template. Adds these three nucleotides in the order of C, C, and A to the tRNA nucleotide-73, using CTP and ATP as substrates and producing inorganic pyrophosphate. tRNA 3'-terminal CCA addition is required both for tRNA processing and repair. Also involved in tRNA surveillance by mediating tandem CCA addition to generate a CCACCA at the 3' terminus of unstable tRNAs. While stable tRNAs receive only 3'-terminal CCA, unstable tRNAs are marked with CCACCA and rapidly degraded. The protein is Multifunctional CCA protein of Vibrio cholerae serotype O1 (strain ATCC 39541 / Classical Ogawa 395 / O395).